The sequence spans 359 residues: Putative nucleotidyltransferase MAB21L1 (359 aa).

A ribonucleoside 5'-triphosphate is bound by residues 23–24 and 63–66; these read RK and YEGL. Mg(2+)-binding residues include E73 and E75. A ribonucleoside 5'-triphosphate contacts are provided by residues K248 and 252-255; that span reads SILK.

This sequence belongs to the mab-21 family. As to quaternary structure, monomer. Homodecamer; composed of 2 back to back homopentamers. The protein may exist as monomer in solution and oiligomerizes upon ligand binding.

Its subcellular location is the nucleus. Functionally, putative nucleotidyltransferase required for several aspects of embryonic development including normal development of the eye. It is unclear whether it displays nucleotidyltransferase activity in vivo. Binds single-stranded RNA (ssRNA). This chain is Putative nucleotidyltransferase MAB21L1 (MAB21L1), found in Bos taurus (Bovine).